Here is a 289-residue protein sequence, read N- to C-terminus: Borealin (289 aa).

The tract at residues 1 to 58 is required for interaction with INCENP; sequence MAPKKRSSRGTRTNTLRSRKLASFLKDFDREVQVRTKQIESDRQTLLKEVENLYNIEI. The required for centromere localization stretch occupies residues 1-88; the sequence is MAPKKRSSRG…NKQALEEAAK (88 aa). The segment at 1-150 is required for interaction with SENP3; the sequence is MAPKKRSSRG…KKSHKNLRSA (150 aa). Positions 10-109 are required to form a minimal CPC core complex that localizes to the central spindle and midbody and properly executes the role of the CPC during cytokinesis; it reads GTRTNTLRSR…TAEAIQTPLK (100 aa). The required for interaction with INCENP and BIRC5 stretch occupies residues 20-78; it reads KLASFLKDFDREVQVRTKQIESDRQTLLKEVENLYNIEILRLPKALQGMKWLDYFALGG. Residue Arg-91 is modified to Citrulline. Residue Thr-94 is modified to Phosphothreonine; by TTK. Thr-106 is subject to Phosphothreonine. The residue at position 110 (Ser-110) is a Phosphoserine. A disordered region spans residues 122–173; that stretch reads SIKEEEEEEEEGGGGGGRTKKSHKNLRSAKVKRCLPSKKRTQSIQGRGRSKR. Acidic residues predominate over residues 123-133; sequence IKEEEEEEEEG. Residues 139 to 162 are compositionally biased toward basic residues; it reads RTKKSHKNLRSAKVKRCLPSKKRT. Lys-145 participates in a covalent cross-link: Glycyl lysine isopeptide (Lys-Gly) (interchain with G-Cter in SUMO2). Ser-175 is modified (phosphoserine). Thr-198 and Thr-213 each carry phosphothreonine. A phosphoserine mark is found at Ser-228, Ser-233, Ser-247, and Ser-253.

It belongs to the borealin family. As to quaternary structure, may form homooligomers and homodimers. Component of the chromosomal passenger complex (CPC) composed of at least BIRC5/survivin, CDCA8/borealin, INCENP, AURKB or AURKC; in the complex forms a triple-helix bundle-based subcomplex with INCENP and BIRC5. Interacts with SENP3, UBE2I and RANBP2. Interacts (phosphorylated) with SGO1 and SGO2A; the association is dependent on CDK1. Post-translationally, phosphorylated by TTK, essentially at Thr-94. Phosphorylation (probably by CDK1) promotes targeting of the CPC to centromeric DNA. In terms of processing, sumoylated by UBE2I and RANBP2. Desumoylated by SENP3 through the removal of SUMO2 and SUMO3. Citrullinated by PADI4.

The protein localises to the nucleus. It localises to the nucleolus. Its subcellular location is the cytoplasm. The protein resides in the chromosome. It is found in the centromere. The protein localises to the cytoskeleton. It localises to the spindle. Component of the chromosomal passenger complex (CPC), a complex that acts as a key regulator of mitosis. The CPC complex has essential functions at the centromere in ensuring correct chromosome alignment and segregation and is required for chromatin-induced microtubule stabilization and spindle assembly. In the complex, it may be required to direct the CPC to centromeric DNA. Major effector of the TTK kinase in the control of attachment-error-correction and chromosome alignment. The sequence is that of Borealin (Cdca8) from Mus musculus (Mouse).